We begin with the raw amino-acid sequence, 501 residues long: Zinc-binding lipoprotein AdcA (501 aa).

Positions 1–18 are cleaved as a signal peptide; sequence MKKISLLLASLCALFLVA. Residue cysteine 19 is the site of N-palmitoyl cysteine attachment. The S-diacylglycerol cysteine moiety is linked to residue cysteine 19. Residue histidine 63 coordinates Zn(2+). Positions 116–136 are disordered; the sequence is LPGGEEEEGDHDHGEEGHHHE. Positions 120–136 are his-rich loop; it reads EEEEGDHDHGEEGHHHE. Basic and acidic residues predominate over residues 125–136; that stretch reads DHDHGEEGHHHE. Residues histidine 140, histidine 204, and glutamate 279 each coordinate Zn(2+).

Belongs to the bacterial solute-binding protein 9 family.

Its subcellular location is the cell membrane. Its function is as follows. Part of the ATP-binding cassette (ABC) transport system AdcABC involved in zinc import. Binds zinc with high affinity and specificity and delivers it to the membrane permease for translocation into the cytoplasm. Required for transformability. The polypeptide is Zinc-binding lipoprotein AdcA (adcA) (Streptococcus pneumoniae (strain ATCC BAA-255 / R6)).